Consider the following 1199-residue polypeptide: Pyruvate-flavodoxin oxidoreductase (1199 aa).

2 4Fe-4S ferredoxin-type domains span residues 699-728 (EIPV…AKVY) and 755-784 (FTIQ…EPSL). [4Fe-4S] cluster-binding residues include Cys708, Cys711, Cys714, Cys718, Cys764, Cys767, Cys770, Cys774, Cys838, Cys841, Cys866, and Cys1103.

This sequence belongs to the pyruvate:ferredoxin/flavodoxin oxidoreductase family. Requires [4Fe-4S] cluster as cofactor.

It carries out the reaction oxidized [flavodoxin] + pyruvate + CoA + 2 H(+) = reduced [flavodoxin] + acetyl-CoA + CO2. In terms of biological role, oxidoreductase required for the transfer of electrons from pyruvate to flavodoxin, which reduces nitrogenase. This is Pyruvate-flavodoxin oxidoreductase (nifJ) from Nostoc sp. (strain PCC 7120 / SAG 25.82 / UTEX 2576).